The following is a 335-amino-acid chain: tRNA N6-adenosine threonylcarbamoyltransferase (335 aa).

H109, H113, and Y130 together coordinate a divalent metal cation. Residues 130-134, D162, G177, E181, and N266 contribute to the substrate site; that span reads YVSGG. D294 provides a ligand contact to a divalent metal cation.

It belongs to the KAE1 / TsaD family. As to quaternary structure, component of the EKC/KEOPS complex composed of at least GON7, TP53RK, TPRKB, OSGEP and LAGE3; the whole complex dimerizes. The cofactor is a divalent metal cation.

Its subcellular location is the cytoplasm. The protein resides in the nucleus. It catalyses the reaction L-threonylcarbamoyladenylate + adenosine(37) in tRNA = N(6)-L-threonylcarbamoyladenosine(37) in tRNA + AMP + H(+). Component of the EKC/KEOPS complex that is required for the formation of a threonylcarbamoyl group on adenosine at position 37 (t(6)A37) in tRNAs that read codons beginning with adenine. The complex is probably involved in the transfer of the threonylcarbamoyl moiety of threonylcarbamoyl-AMP (TC-AMP) to the N6 group of A37. OSGEP likely plays a direct catalytic role in this reaction, but requires other protein(s) of the complex to fulfill this activity. The sequence is that of tRNA N6-adenosine threonylcarbamoyltransferase (Osgep) from Rattus norvegicus (Rat).